The chain runs to 396 residues: 2,3-diketo-5-methylthiopentyl-1-phosphate enolase (396 aa).

The active-site Proton acceptor is K85. Substrate-binding positions include K134, 160 to 163, H251, G323, and 345 to 346; these read KDDE and GG. Mg(2+)-binding residues include K160, D162, and E163. K160 is modified (N6-carboxylysine).

This sequence belongs to the RuBisCO large chain family. Type IV subfamily. In terms of assembly, homodimer. The cofactor is Mg(2+).

It catalyses the reaction 5-methylsulfanyl-2,3-dioxopentyl phosphate = 2-hydroxy-5-methylsulfanyl-3-oxopent-1-enyl phosphate. The protein operates within amino-acid biosynthesis; L-methionine biosynthesis via salvage pathway; L-methionine from S-methyl-5-thio-alpha-D-ribose 1-phosphate: step 3/6. Functionally, catalyzes the enolization of 2,3-diketo-5-methylthiopentyl-1-phosphate (DK-MTP-1-P) into 2-hydroxy-3-keto-5-methylthiopentenyl-1-phosphate (HK-MTPenyl-1-P). In Exiguobacterium sibiricum (strain DSM 17290 / CCUG 55495 / CIP 109462 / JCM 13490 / 255-15), this protein is 2,3-diketo-5-methylthiopentyl-1-phosphate enolase.